A 117-amino-acid chain; its full sequence is Large ribosomal subunit protein bL19 (117 aa).

This sequence belongs to the bacterial ribosomal protein bL19 family.

This protein is located at the 30S-50S ribosomal subunit interface and may play a role in the structure and function of the aminoacyl-tRNA binding site. The chain is Large ribosomal subunit protein bL19 from Aliivibrio fischeri (strain ATCC 700601 / ES114) (Vibrio fischeri).